Reading from the N-terminus, the 314-residue chain is Protein phosphatase PTC7 homolog fig (314 aa).

In terms of domain architecture, PPM-type phosphatase spans 43-309 (PYLVTVVQGR…DDITLILSSV (267 aa)). Mn(2+) is bound by residues D87, G88, and D232.

It belongs to the PP2C family. It depends on Mg(2+) as a cofactor. Mn(2+) is required as a cofactor.

It carries out the reaction O-phospho-L-seryl-[protein] + H2O = L-seryl-[protein] + phosphate. It catalyses the reaction O-phospho-L-threonyl-[protein] + H2O = L-threonyl-[protein] + phosphate. This is Protein phosphatase PTC7 homolog fig from Drosophila sechellia (Fruit fly).